A 299-amino-acid polypeptide reads, in one-letter code: Acetaldehyde dehydrogenase (299 aa).

11–14 (SGNI) serves as a coordination point for NAD(+). Cys126 serves as the catalytic Acyl-thioester intermediate. NAD(+)-binding positions include 157-165 (SAGPGTRAN) and Asn267.

Belongs to the acetaldehyde dehydrogenase family.

It carries out the reaction acetaldehyde + NAD(+) + CoA = acetyl-CoA + NADH + H(+). This is Acetaldehyde dehydrogenase from Bacillus cereus (strain ATCC 10987 / NRS 248).